The sequence spans 302 residues: Methionyl-tRNA formyltransferase (302 aa).

Position 108–111 (108–111 (SLLP)) interacts with (6S)-5,6,7,8-tetrahydrofolate. Residues 276–288 (REGKRPMEPEEFL) show a composition bias toward basic and acidic residues. Residues 276 to 302 (REGKRPMEPEEFLRGFPLPEGSRAHTA) form a disordered region.

This sequence belongs to the Fmt family.

It catalyses the reaction L-methionyl-tRNA(fMet) + (6R)-10-formyltetrahydrofolate = N-formyl-L-methionyl-tRNA(fMet) + (6S)-5,6,7,8-tetrahydrofolate + H(+). In terms of biological role, attaches a formyl group to the free amino group of methionyl-tRNA(fMet). The formyl group appears to play a dual role in the initiator identity of N-formylmethionyl-tRNA by promoting its recognition by IF2 and preventing the misappropriation of this tRNA by the elongation apparatus. The chain is Methionyl-tRNA formyltransferase from Cereibacter sphaeroides (strain ATCC 17029 / ATH 2.4.9) (Rhodobacter sphaeroides).